Consider the following 341-residue polypeptide: UPF0324 membrane protein SMU_2059c (341 aa).

A run of 11 helical transmembrane segments spans residues 7–24, 28–47, 68–85, 90–107, 120–142, 147–169, 178–200, 211–233, 254–276, 291–310, and 317–339; these read KLSG…AWFL, FPLV…LAIF, FAVV…VLTV, LPII…AFLL, LVGV…VIQA, IAQS…PTLG, GFAL…AAAW, GATI…LSFY, VFPM…TALG, FCIV…VKLV, and IVLG…HLLG.

Belongs to the UPF0324 family.

The protein resides in the cell membrane. The sequence is that of UPF0324 membrane protein SMU_2059c from Streptococcus mutans serotype c (strain ATCC 700610 / UA159).